The following is a 296-amino-acid chain: Formamidopyrimidine-DNA glycosylase (296 aa).

The active-site Schiff-base intermediate with DNA is Pro2. Catalysis depends on Glu3, which acts as the Proton donor. Lys61 serves as the catalytic Proton donor; for beta-elimination activity. DNA-binding residues include His104, Arg123, and Lys169. The FPG-type zinc finger occupies 255 to 289 (DAYGREGEPCRRCGAIMRREKFMNRSSFYCPRCQP). Residue Arg279 is the Proton donor; for delta-elimination activity of the active site.

It belongs to the FPG family. Monomer. Zn(2+) serves as cofactor.

It catalyses the reaction Hydrolysis of DNA containing ring-opened 7-methylguanine residues, releasing 2,6-diamino-4-hydroxy-5-(N-methyl)formamidopyrimidine.. The catalysed reaction is 2'-deoxyribonucleotide-(2'-deoxyribose 5'-phosphate)-2'-deoxyribonucleotide-DNA = a 3'-end 2'-deoxyribonucleotide-(2,3-dehydro-2,3-deoxyribose 5'-phosphate)-DNA + a 5'-end 5'-phospho-2'-deoxyribonucleoside-DNA + H(+). In terms of biological role, involved in base excision repair of DNA damaged by oxidation or by mutagenic agents. Acts as a DNA glycosylase that recognizes and removes damaged bases. Has a preference for oxidized purines, such as 7,8-dihydro-8-oxoguanine (8-oxoG). Has AP (apurinic/apyrimidinic) lyase activity and introduces nicks in the DNA strand. Cleaves the DNA backbone by beta-delta elimination to generate a single-strand break at the site of the removed base with both 3'- and 5'-phosphates. This is Formamidopyrimidine-DNA glycosylase from Mycobacterium sp. (strain JLS).